Reading from the N-terminus, the 184-residue chain is ATP synthase subunit b, chloroplastic (184 aa).

Residues Leu-27–Leu-49 form a helical membrane-spanning segment.

The protein belongs to the ATPase B chain family. In terms of assembly, F-type ATPases have 2 components, F(1) - the catalytic core - and F(0) - the membrane proton channel. F(1) has five subunits: alpha(3), beta(3), gamma(1), delta(1), epsilon(1). F(0) has four main subunits: a(1), b(1), b'(1) and c(10-14). The alpha and beta chains form an alternating ring which encloses part of the gamma chain. F(1) is attached to F(0) by a central stalk formed by the gamma and epsilon chains, while a peripheral stalk is formed by the delta, b and b' chains.

The protein resides in the plastid. Its subcellular location is the chloroplast thylakoid membrane. F(1)F(0) ATP synthase produces ATP from ADP in the presence of a proton or sodium gradient. F-type ATPases consist of two structural domains, F(1) containing the extramembraneous catalytic core and F(0) containing the membrane proton channel, linked together by a central stalk and a peripheral stalk. During catalysis, ATP synthesis in the catalytic domain of F(1) is coupled via a rotary mechanism of the central stalk subunits to proton translocation. Its function is as follows. Component of the F(0) channel, it forms part of the peripheral stalk, linking F(1) to F(0). This is ATP synthase subunit b, chloroplastic from Pelargonium hortorum (Common geranium).